The sequence spans 462 residues: Light-independent protochlorophyllide reductase subunit N (462 aa).

3 residues coordinate [4Fe-4S] cluster: cysteine 24, cysteine 49, and cysteine 109.

It belongs to the BchN/ChlN family. In terms of assembly, protochlorophyllide reductase is composed of three subunits; ChlL, ChlN and ChlB. Forms a heterotetramer of two ChlB and two ChlN subunits. It depends on [4Fe-4S] cluster as a cofactor.

It is found in the plastid. The protein localises to the chloroplast. The enzyme catalyses chlorophyllide a + oxidized 2[4Fe-4S]-[ferredoxin] + 2 ADP + 2 phosphate = protochlorophyllide a + reduced 2[4Fe-4S]-[ferredoxin] + 2 ATP + 2 H2O. The protein operates within porphyrin-containing compound metabolism; chlorophyll biosynthesis (light-independent). Its function is as follows. Component of the dark-operative protochlorophyllide reductase (DPOR) that uses Mg-ATP and reduced ferredoxin to reduce ring D of protochlorophyllide (Pchlide) to form chlorophyllide a (Chlide). This reaction is light-independent. The NB-protein (ChlN-ChlB) is the catalytic component of the complex. The polypeptide is Light-independent protochlorophyllide reductase subunit N (Pleurastrum terricola (Filamentous green alga)).